Here is a 554-residue protein sequence, read N- to C-terminus: 3-(3-hydroxy-phenyl)propionate/3-hydroxycinnamic acid hydroxylase (554 aa).

FAD contacts are provided by residues 17 to 46 (QVAI…VVEK) and 285 to 295 (FRIDRVLLAGD).

This sequence belongs to the PheA/TfdB FAD monooxygenase family. FAD serves as cofactor.

It catalyses the reaction 3-(3-hydroxyphenyl)propanoate + NADH + O2 + H(+) = 3-(2,3-dihydroxyphenyl)propanoate + NAD(+) + H2O. It carries out the reaction (2E)-3-(3-hydroxyphenyl)prop-2-enoate + NADH + O2 + H(+) = (2E)-3-(2,3-dihydroxyphenyl)prop-2-enoate + NAD(+) + H2O. The protein operates within aromatic compound metabolism; 3-phenylpropanoate degradation. Catalyzes the insertion of one atom of molecular oxygen into position 2 of the phenyl ring of 3-(3-hydroxyphenyl)propionate (3-HPP) and hydroxycinnamic acid (3HCI). This is 3-(3-hydroxy-phenyl)propionate/3-hydroxycinnamic acid hydroxylase from Escherichia coli O8 (strain IAI1).